Reading from the N-terminus, the 553-residue chain is Dihydroxy-acid dehydratase (553 aa).

Asp-78 is a Mg(2+) binding site. Cys-119 is a binding site for [2Fe-2S] cluster. Residues Asp-120 and Lys-121 each contribute to the Mg(2+) site. N6-carboxylysine is present on Lys-121. Cys-192 lines the [2Fe-2S] cluster pocket. Glu-442 contributes to the Mg(2+) binding site. The active-site Proton acceptor is the Ser-468.

The protein belongs to the IlvD/Edd family. As to quaternary structure, homodimer. [2Fe-2S] cluster serves as cofactor. Requires Mg(2+) as cofactor.

It carries out the reaction (2R)-2,3-dihydroxy-3-methylbutanoate = 3-methyl-2-oxobutanoate + H2O. The enzyme catalyses (2R,3R)-2,3-dihydroxy-3-methylpentanoate = (S)-3-methyl-2-oxopentanoate + H2O. It participates in amino-acid biosynthesis; L-isoleucine biosynthesis; L-isoleucine from 2-oxobutanoate: step 3/4. It functions in the pathway amino-acid biosynthesis; L-valine biosynthesis; L-valine from pyruvate: step 3/4. Functionally, functions in the biosynthesis of branched-chain amino acids. Catalyzes the dehydration of (2R,3R)-2,3-dihydroxy-3-methylpentanoate (2,3-dihydroxy-3-methylvalerate) into 2-oxo-3-methylpentanoate (2-oxo-3-methylvalerate) and of (2R)-2,3-dihydroxy-3-methylbutanoate (2,3-dihydroxyisovalerate) into 2-oxo-3-methylbutanoate (2-oxoisovalerate), the penultimate precursor to L-isoleucine and L-valine, respectively. This chain is Dihydroxy-acid dehydratase, found in Campylobacter hominis (strain ATCC BAA-381 / DSM 21671 / CCUG 45161 / LMG 19568 / NCTC 13146 / CH001A).